The primary structure comprises 125 residues: Monothiol glutaredoxin-S2 (125 aa).

The Glutaredoxin domain maps to 28 to 124 (AERVGRLVRE…PRLREVGALC (97 aa)). Position 48 (C48) interacts with [2Fe-2S] cluster.

The protein belongs to the glutaredoxin family. CC-type subfamily.

It is found in the cytoplasm. Its function is as follows. May only reduce GSH-thiol disulfides, but not protein disulfides. This chain is Monothiol glutaredoxin-S2 (GRXS2), found in Oryza sativa subsp. japonica (Rice).